The chain runs to 461 residues: Armadillo repeat-containing X-linked protein 1 (461 aa).

Residues 1 to 6 (MGRTRE) are Mitochondrial intermembrane-facing. Mitochondrion outer membrane (MOM)-targeting sequence stretches follow at residues 1-6 (MGRTRE) and 26-36 (RLTWGKDENEK). The chain crosses the membrane as a helical; Signal-anchor span at residues 7-29 (AGCVAAGMVIGAGACYCVYRLTW). At 30–461 (GKDENEKLWD…VKVLKVLTKL (432 aa)) the chain is on the cytoplasmic side. Disordered stretches follow at residues 34–110 (NEKL…HSEG) and 148–192 (SSLP…PATA). Residues 38 to 51 (WDDEDEEEEEEEES) are compositionally biased toward acidic residues. Residues 96–110 (PDVKKEVYPESHSEG) are compositionally biased toward basic and acidic residues. Positions 167-185 (SRARNRTSGKVKRKNRSKS) are enriched in basic residues. ARM repeat units follow at residues 203-243 (PYKI…NNAA), 245-284 (SFNQ…NLSV), 366-406 (PAMT…NIND), and 423-461 (SSLF…LTKL).

It belongs to the eutherian X-chromosome-specific Armcx family. Interacts with MIRO1.

The protein resides in the mitochondrion. The protein localises to the mitochondrion outer membrane. In terms of biological role, regulates mitochondrial transport during axon regeneration. Increases the proportion of motile mitochondria by recruiting stationary mitochondria into the motile pool. Enhances mitochondria movement and neurite growth in both adult axons and embryonic neurons. Promotes neuronal survival and axon regeneration after nerve injury. May link mitochondria to the Trak1-kinesin motor complex via its interaction with MIRO1. This Rattus norvegicus (Rat) protein is Armadillo repeat-containing X-linked protein 1 (Armcx1).